Here is a 128-residue protein sequence, read N- to C-terminus: Protein BEX2 (128 aa).

An Omega-N-methylarginine modification is found at R50. The interval 107-128 (SLRAVSTDPPHHDHHDEFCLMP) is disordered. The segment covering 115 to 128 (PPHHDHHDEFCLMP) has biased composition (basic and acidic residues). A his cluster region spans residues 117–121 (HHDHH). C125 contacts Zn(2+).

It belongs to the BEX family. Interacts with LMO2, possibly leading to regulate the transcriptional activity of a DNA-binding complex containing LMO2. Interacts with OMP. As to expression, expressed in central nervous system, with high level in pituitary, cerebellum and temporal lobe. Widely expressed in breast cancer cell lines.

Its subcellular location is the cytoplasm. The protein localises to the nucleus. In terms of biological role, regulator of mitochondrial apoptosis and G1 cell cycle in breast cancer. Protects the breast cancer cells against mitochondrial apoptosis and this effect is mediated through the modulation of BCL2 protein family, which involves the positive regulation of anti-apoptotic member BCL2 and the negative regulation of pro-apoptotic members BAD, BAK1 and PUMA. Required for the normal cell cycle progression during G1 in breast cancer cells through the regulation of CCND1 and CDKN1A. Regulates the level of PP2A regulatory subunit B and PP2A phosphatase activity. In absence of reductive stress, acts as a pseudosubstrate for the CRL2(FEM1B) complex: associates with FEM1B via zinc, thereby preventing association between FEM1B and its substrates. This Homo sapiens (Human) protein is Protein BEX2 (BEX2).